Here is a 185-residue protein sequence, read N- to C-terminus: Ribosome-recycling factor (185 aa).

Belongs to the RRF family.

The protein resides in the cytoplasm. Its function is as follows. Responsible for the release of ribosomes from messenger RNA at the termination of protein biosynthesis. May increase the efficiency of translation by recycling ribosomes from one round of translation to another. This is Ribosome-recycling factor from Shewanella oneidensis (strain ATCC 700550 / JCM 31522 / CIP 106686 / LMG 19005 / NCIMB 14063 / MR-1).